We begin with the raw amino-acid sequence, 345 residues long: Src kinase-associated phosphoprotein 1 (345 aa).

Positions 109 to 212 (KIFKQGYLER…WVEQIQFLVK (104 aa)) constitute a PH domain. The interval 226 to 274 (ETYDDIESTESSPVVGLTNDSENSLQEDDVYESIPGDEETEESEDENYE) is disordered. Residues 250–272 (LQEDDVYESIPGDEETEESEDEN) show a composition bias toward acidic residues. An SH3 domain is found at 283–344 (FYGDYYQGLW…PKDYLTLAFD (62 aa)).

This sequence belongs to the SKAP family. Homodimer. In terms of processing, phosphorylated on tyrosines.

The protein resides in the cytoplasm. Its subcellular location is the nucleus. It is found in the cell membrane. Positively regulates T-cell receptor signaling. Required for optimal conjugation between T-cells and antigen-presenting cells. The sequence is that of Src kinase-associated phosphoprotein 1 (skap1) from Xenopus tropicalis (Western clawed frog).